The following is a 217-amino-acid chain: Probable cutinase 3 (217 aa).

A signal peptide spans Met1–Ala17. 2 disulfides stabilise this stretch: Cys39–Cys118 and Cys65–Cys79. Catalysis depends on Ser129, which acts as the Nucleophile. Cys180 and Cys187 are disulfide-bonded. Asp184 is an active-site residue. His197 acts as the Proton donor/acceptor in catalysis.

Belongs to the cutinase family.

The protein resides in the secreted. The enzyme catalyses cutin + H2O = cutin monomers.. In terms of biological role, catalyzes the hydrolysis of complex carboxylic polyesters found in the cell wall of plants. Degrades cutin, a macromolecule that forms the structure of the plant cuticle. The sequence is that of Probable cutinase 3 from Aspergillus fumigatus (strain CBS 144.89 / FGSC A1163 / CEA10) (Neosartorya fumigata).